A 188-amino-acid polypeptide reads, in one-letter code: Surfactant protein C (188 aa).

Positions 1–23 (MDMGSKEALMESPPDYSAAPRGR) are excised as a propeptide. Residues cysteine 28 and cysteine 29 are each lipidated (S-palmitoyl cysteine). Positions 59–188 (HMSQKHTEMV…LCGEVPLIYI (130 aa)) are excised as a propeptide. Positions 94–188 (FPIGSTGIVT…LCGEVPLIYI (95 aa)) constitute a BRICHOS domain. Cysteines 121 and 180 form a disulfide. Residues 144–164 (NPAEPPTQRGQDKGPAAGPAS) form a disordered region.

The protein resides in the secreted. It is found in the extracellular space. It localises to the surface film. In terms of biological role, pulmonary surfactant associated proteins promote alveolar stability by lowering the surface tension at the air-liquid interface in the peripheral air spaces. This chain is Surfactant protein C (SFTPC), found in Oryctolagus cuniculus (Rabbit).